The sequence spans 344 residues: Ferrochelatase (344 aa).

2 residues coordinate Fe cation: His214 and Glu295.

This sequence belongs to the ferrochelatase family.

Its subcellular location is the cytoplasm. It carries out the reaction heme b + 2 H(+) = protoporphyrin IX + Fe(2+). Its pathway is porphyrin-containing compound metabolism; protoheme biosynthesis; protoheme from protoporphyrin-IX: step 1/1. Functionally, catalyzes the ferrous insertion into protoporphyrin IX. In Rhizobium etli (strain CIAT 652), this protein is Ferrochelatase.